Here is a 442-residue protein sequence, read N- to C-terminus: MITPKVLSGFKDRLPKDAIQKAQLLAKVSVVFQSFGFVPIETPHLEYAEALLPDASSDIQKEIYRFKDHGDRDVALRFDLTVPLARFVSLHHQILGMPFKRYAIGNVFRGERAQKGRYREFTQCDFDFIGSESLVCDAEIIQVIIASLKALDLEDFCVSINHRKILNGICEYFGVSQVNEALRIVDKLEKIGLDGVGEELKKECDLNSNTIKELLEMVQIKQNDLSHAEFFEKIAYLKDYNENLKKGIQDLERLYQLLGDLQISQNLYKIDFSIARGLGYYTGIVYETTLNDMKSLGSVCSGGRYDHLTKNFSKENLQGVGASIGIDRLIVALSEMQLLDERSTQAKVLIACMHEEYFSYANRLAESLRQSGIFSEVYPEAQKIKKPFSYANHKGHEFVAVIGEEEFKSETLSLKNMHSGMQLNCLSFLKALEIIGENDEDL.

The protein belongs to the class-II aminoacyl-tRNA synthetase family. In terms of assembly, homodimer.

The protein localises to the cytoplasm. It carries out the reaction tRNA(His) + L-histidine + ATP = L-histidyl-tRNA(His) + AMP + diphosphate + H(+). In Helicobacter pylori (strain G27), this protein is Histidine--tRNA ligase.